A 228-amino-acid polypeptide reads, in one-letter code: Chaperone protein FanE (228 aa).

The N-terminal stretch at 1–19 (MNKFISIIALCVFSSYANA) is a signal peptide. A disulfide bridge connects residues Cys157 and Cys198.

The protein belongs to the periplasmic pilus chaperone family.

The protein localises to the periplasm. Functionally, mediates assembly of pili by forming soluble multimeric complexes with pili subunits as an intermediate step in the assembly process. This protein is involved in K99 pili assembly. This chain is Chaperone protein FanE (fanE), found in Escherichia coli.